Consider the following 60-residue polypeptide: Large ribosomal subunit protein bL32 (60 aa).

A disordered region spans residues 1-21 (MAVPARHTSKAKKNKRRTHYK). Over residues 7–20 (HTSKAKKNKRRTHY) the composition is skewed to basic residues.

This sequence belongs to the bacterial ribosomal protein bL32 family.

The polypeptide is Large ribosomal subunit protein bL32 (Streptococcus equi subsp. zooepidemicus (strain H70)).